The primary structure comprises 380 residues: Cell division protein ZipA (380 aa).

The Periplasmic segment spans residues 1–7 (MEDNFRN). A helical membrane pass occupies residues 8–28 (VLIILSAIVITAIFIHGLWTL). The Cytoplasmic portion of the chain corresponds to 29–380 (RKQKNPYKLK…DRKSRIALVE (352 aa)).

The protein belongs to the ZipA family. Interacts with FtsZ via their C-terminal domains.

The protein localises to the cell inner membrane. In terms of biological role, essential cell division protein that stabilizes the FtsZ protofilaments by cross-linking them and that serves as a cytoplasmic membrane anchor for the Z ring. Also required for the recruitment to the septal ring of downstream cell division proteins. This is Cell division protein ZipA from Colwellia psychrerythraea (strain 34H / ATCC BAA-681) (Vibrio psychroerythus).